We begin with the raw amino-acid sequence, 213 residues long: ATP phosphoribosyltransferase (213 aa).

Belongs to the ATP phosphoribosyltransferase family. Short subfamily. In terms of assembly, heteromultimer composed of HisG and HisZ subunits.

Its subcellular location is the cytoplasm. It catalyses the reaction 1-(5-phospho-beta-D-ribosyl)-ATP + diphosphate = 5-phospho-alpha-D-ribose 1-diphosphate + ATP. Its pathway is amino-acid biosynthesis; L-histidine biosynthesis; L-histidine from 5-phospho-alpha-D-ribose 1-diphosphate: step 1/9. Its function is as follows. Catalyzes the condensation of ATP and 5-phosphoribose 1-diphosphate to form N'-(5'-phosphoribosyl)-ATP (PR-ATP). Has a crucial role in the pathway because the rate of histidine biosynthesis seems to be controlled primarily by regulation of HisG enzymatic activity. The polypeptide is ATP phosphoribosyltransferase (hisG) (Listeria monocytogenes serovar 1/2a (strain ATCC BAA-679 / EGD-e)).